The following is a 136-amino-acid chain: Acyl-CoA thioesterase YbgC (136 aa).

Asp-18 is an active-site residue.

It belongs to the 4-hydroxybenzoyl-CoA thioesterase family.

Its function is as follows. Displays acyl-CoA thioesterase activity with short chain aliphatic acyl-CoA thioesters, such as propionyl-CoA and butyryl-CoA. Enzyme activity is relatively low, suggesting that the acyl-CoA thioesters used in the assays are not the physiological substrates. Has no detectable activity with 4-hydroxybenzoyl-CoA, lauroyl-CoA (C12:0), arachidoyl-CoA (C20:0) and arachidonoyl-CoA (C20:4). The protein is Acyl-CoA thioesterase YbgC (ybgC) of Haemophilus influenzae (strain ATCC 51907 / DSM 11121 / KW20 / Rd).